The following is a 532-amino-acid chain: 2,3-bisphosphoglycerate-independent phosphoglycerate mutase (532 aa).

Mn(2+) contacts are provided by aspartate 15 and serine 65. The Phosphoserine intermediate role is filled by serine 65. Substrate is bound by residues histidine 126, 156-157 (RD), arginine 188, arginine 194, 258-261 (RPDR), and lysine 331. Residues aspartate 398, histidine 402, aspartate 439, histidine 440, and histidine 457 each coordinate Mn(2+).

The protein belongs to the BPG-independent phosphoglycerate mutase family. As to quaternary structure, monomer. Mn(2+) is required as a cofactor.

It carries out the reaction (2R)-2-phosphoglycerate = (2R)-3-phosphoglycerate. It participates in carbohydrate degradation; glycolysis; pyruvate from D-glyceraldehyde 3-phosphate: step 3/5. Catalyzes the interconversion of 2-phosphoglycerate and 3-phosphoglycerate. This chain is 2,3-bisphosphoglycerate-independent phosphoglycerate mutase, found in Cyanothece sp. (strain PCC 7425 / ATCC 29141).